We begin with the raw amino-acid sequence, 203 residues long: Endo-type membrane-bound lytic murein transglycosylase A (203 aa).

The first 15 residues, 1–15 (MKLRWFAFLIVLLAG), serve as a signal peptide directing secretion. Cys-16 is lipidated: N-palmitoyl cysteine. The S-diacylglycerol cysteine moiety is linked to residue Cys-16.

It belongs to the transglycosylase Slt family.

It localises to the cell outer membrane. The catalysed reaction is Endolytic cleavage of the (1-&gt;4)-beta-glycosidic linkage between N-acetylmuramic acid (MurNAc) and N-acetylglucosamine (GlcNAc) residues in peptidoglycan with concomitant formation of a 1,6-anhydrobond in the MurNAc residue.. In terms of biological role, murein-degrading enzyme. May play a role in recycling of muropeptides during cell elongation and/or cell division. Preferentially cleaves at a distance of more than two disaccharide units from the ends of the glycan chain. The chain is Endo-type membrane-bound lytic murein transglycosylase A from Shigella boydii serotype 4 (strain Sb227).